The chain runs to 145 residues: MAALTGLWGSFAHVSRAFSQRCFSTSGSLSAVQKMTRVRVVDNSALGSTPYHRPPRCIHVYNKSGVGKVGDQILLAIRGQKKKALIVGHRMPGSRMTPKFDSNNVVLIEDNGNPVGTRIKIPIPTSLRRREGEYSKVLAIAQNFV.

The N-terminal 30 residues, 1 to 30, are a transit peptide targeting the mitochondrion; the sequence is MAALTGLWGSFAHVSRAFSQRCFSTSGSLS.

The protein belongs to the universal ribosomal protein uL14 family. Component of the mitochondrial ribosome large subunit (39S) which comprises a 16S rRNA and about 50 distinct proteins. Interacts with MALSU1.

Its subcellular location is the mitochondrion. Its function is as follows. May form part of 2 intersubunit bridges in the assembled ribosome. Upon binding to MALSU1, intersubunit bridge formation is blocked, preventing ribosome formation and repressing translation. This is Large ribosomal subunit protein uL14m (Mrpl14) from Mus musculus (Mouse).